The chain runs to 275 residues: Tryptophan synthase alpha chain (275 aa).

Residues Glu-51 and Glu-62 each act as proton acceptor in the active site.

It belongs to the TrpA family. Tetramer of two alpha and two beta chains.

It carries out the reaction (1S,2R)-1-C-(indol-3-yl)glycerol 3-phosphate + L-serine = D-glyceraldehyde 3-phosphate + L-tryptophan + H2O. Its pathway is amino-acid biosynthesis; L-tryptophan biosynthesis; L-tryptophan from chorismate: step 5/5. Functionally, the alpha subunit is responsible for the aldol cleavage of indoleglycerol phosphate to indole and glyceraldehyde 3-phosphate. This chain is Tryptophan synthase alpha chain, found in Caulobacter sp. (strain K31).